The following is a 293-amino-acid chain: uncharacterized protein (293 aa).

Disordered stretches follow at residues 20–148 (ELHS…NNNT) and 226–283 (RENQ…GNKN). Composition is skewed to acidic residues over residues 37–47 (LEDDEEYDDDQ), 56–91 (EEFDYDNDYNDEEFYDEDDDFKEDDDEEEEEEDDEM), and 99–112 (NIDDDDYEEDEEEQ). Composition is skewed to low complexity over residues 117–148 (TNNNNNTTTTTPYTTYNNNNNNDINNNNNNNT) and 232–283 (NSNS…GNKN).

This is an uncharacterized protein from Dictyostelium discoideum (Social amoeba).